The following is a 407-amino-acid chain: Substance-P receptor (407 aa).

Residues 1-31 (MDNVLPVDSDLFPNISTNTSEPNQFVQPAWQ) are Extracellular-facing. 2 N-linked (GlcNAc...) asparagine glycosylation sites follow: N14 and N18. Residues 32–54 (IVLWAAAYTVIVVTSVVGNVVVM) traverse the membrane as a helical segment. At 55–64 (WIILAHKRMR) the chain is on the cytoplasmic side. A helical transmembrane segment spans residues 65–86 (TVTNYFLVNLAFAEASMAAFNT). Over 87–106 (VVNFTYAVHNEWYYGLFYCK) the chain is Extracellular. A disulfide bridge links C105 with C180. A helical transmembrane segment spans residues 107–128 (FHNFFPIAAVFASIYSMTAVAF). The Cytoplasmic portion of the chain corresponds to 129 to 148 (DRYMAIIHPLQPRLSATATK). Residues 149–169 (VVICVIWVLALLLAFPQGYYS) traverse the membrane as a helical segment. Over 170-194 (TTETMPGRVVCMIEWPSHPDKIYEK) the chain is Extracellular. Residues 195-219 (VYHICVTVLIYFLPLLVIGYAYTVV) traverse the membrane as a helical segment. The Cytoplasmic portion of the chain corresponds to 220 to 248 (GITLWASEIPGDSSDRYHEQVSAKRKVVK). Residues 249 to 270 (MMIVVVCTFAICWLPFHIFFLL) traverse the membrane as a helical segment. The Extracellular portion of the chain corresponds to 271–283 (PYINPDLYLKKFI). The helical transmembrane segment at 284-308 (QQVYLAIMWLAMSSTMYNPIIYCCL) threads the bilayer. Over 309 to 407 (NDRFRLGFKH…SSSFYSNMLS (99 aa)) the chain is Cytoplasmic. C322 carries S-palmitoyl cysteine lipidation. The segment at 363–407 (GAHEEDPEEGPKATPSSLDLTSNGSSRSNSKTVTESSSFYSNMLS) is disordered. The span at 376–407 (TPSSLDLTSNGSSRSNSKTVTESSSFYSNMLS) shows a compositional bias: polar residues.

Belongs to the G-protein coupled receptor 1 family. Interacts with ARRB1.

The protein localises to the cell membrane. Its function is as follows. This is a receptor for the tachykinin neuropeptide substance P. It is probably associated with G proteins that activate a phosphatidylinositol-calcium second messenger system. The rank order of affinity of this receptor to tachykinins is: substance P &gt; substance K &gt; neuromedin-K. The protein is Substance-P receptor (TACR1) of Cavia porcellus (Guinea pig).